The sequence spans 202 residues: Imidazole glycerol phosphate synthase subunit HisH (202 aa).

A Glutamine amidotransferase type-1 domain is found at 3–202; the sequence is RIVIIDYGLG…KILKNFVEMC (200 aa). The active-site Nucleophile is the cysteine 79. Catalysis depends on residues histidine 183 and glutamate 185.

Heterodimer of HisH and HisF.

It localises to the cytoplasm. It carries out the reaction 5-[(5-phospho-1-deoxy-D-ribulos-1-ylimino)methylamino]-1-(5-phospho-beta-D-ribosyl)imidazole-4-carboxamide + L-glutamine = D-erythro-1-(imidazol-4-yl)glycerol 3-phosphate + 5-amino-1-(5-phospho-beta-D-ribosyl)imidazole-4-carboxamide + L-glutamate + H(+). The enzyme catalyses L-glutamine + H2O = L-glutamate + NH4(+). Its pathway is amino-acid biosynthesis; L-histidine biosynthesis; L-histidine from 5-phospho-alpha-D-ribose 1-diphosphate: step 5/9. In terms of biological role, IGPS catalyzes the conversion of PRFAR and glutamine to IGP, AICAR and glutamate. The HisH subunit catalyzes the hydrolysis of glutamine to glutamate and ammonia as part of the synthesis of IGP and AICAR. The resulting ammonia molecule is channeled to the active site of HisF. This Methanosarcina acetivorans (strain ATCC 35395 / DSM 2834 / JCM 12185 / C2A) protein is Imidazole glycerol phosphate synthase subunit HisH.